A 352-amino-acid polypeptide reads, in one-letter code: DNA integrity scanning protein DisA (352 aa).

The DAC domain maps to 3–143 (PQELIEKIKL…NYKYVVNQVD (141 aa)). Residues glycine 71, leucine 89, and 102–106 (TRHRT) contribute to the ATP site.

The protein belongs to the DisA family. As to quaternary structure, homooctamer. It depends on Mg(2+) as a cofactor.

It catalyses the reaction 2 ATP = 3',3'-c-di-AMP + 2 diphosphate. Functionally, participates in a DNA-damage check-point. DisA forms globular foci that rapidly scan along the chromosomes searching for lesions. In terms of biological role, also has diadenylate cyclase activity, catalyzing the condensation of 2 ATP molecules into cyclic di-AMP (c-di-AMP). c-di-AMP likely acts as a signaling molecule that may couple DNA integrity with a cellular process. The chain is DNA integrity scanning protein DisA from Thermotoga petrophila (strain ATCC BAA-488 / DSM 13995 / JCM 10881 / RKU-1).